Consider the following 327-residue polypeptide: Ribonucleoside-diphosphate reductase small chain (327 aa).

Fe cation-binding residues include Asp70, Glu101, and His104. The active site involves Tyr108. Fe cation is bound by residues Glu164, Glu198, and His201.

It belongs to the ribonucleoside diphosphate reductase small chain family. As to quaternary structure, heterotetramer composed of a homodimer of the large subunit (R1) and a homodimer of the small subunit (R2). Larger multisubunit protein complex are also active, composed of (R1)n(R2)n. The cofactor is Fe cation.

It carries out the reaction a 2'-deoxyribonucleoside 5'-diphosphate + [thioredoxin]-disulfide + H2O = a ribonucleoside 5'-diphosphate + [thioredoxin]-dithiol. Functionally, ribonucleoside-diphosphate reductase holoenzyme provides the precursors necessary for viral DNA synthesis. Allows virus growth in non-dividing cells. Catalyzes the biosynthesis of deoxyribonucleotides from the corresponding ribonucleotides. In African swine fever virus (isolate Tick/South Africa/Pretoriuskop Pr4/1996) (ASFV), this protein is Ribonucleoside-diphosphate reductase small chain.